We begin with the raw amino-acid sequence, 103 residues long: Large ribosomal subunit protein bL21 (103 aa).

It belongs to the bacterial ribosomal protein bL21 family. In terms of assembly, part of the 50S ribosomal subunit. Contacts protein L20.

In terms of biological role, this protein binds to 23S rRNA in the presence of protein L20. In Ruthia magnifica subsp. Calyptogena magnifica, this protein is Large ribosomal subunit protein bL21.